Here is a 427-residue protein sequence, read N- to C-terminus: Histidine--tRNA ligase (427 aa).

The protein belongs to the class-II aminoacyl-tRNA synthetase family. Homodimer.

Its subcellular location is the cytoplasm. It catalyses the reaction tRNA(His) + L-histidine + ATP = L-histidyl-tRNA(His) + AMP + diphosphate + H(+). In Aster yellows witches'-broom phytoplasma (strain AYWB), this protein is Histidine--tRNA ligase.